Consider the following 456-residue polypeptide: Serine/threonine-protein kinase meng-po (456 aa).

The interval 15–78 (RSFGDGGSTN…RSSIYKKPDK (64 aa)) is disordered. Positions 22 to 55 (STNSRNSNNNSSTCTNHNNQKRCSTPLTPTSTST) are enriched in low complexity. Residues 101-367 (YNIEKTLAEG…VAKYMKDRWV (267 aa)) form the Protein kinase domain. Residues 107–115 (LAEGCFAKI) and lysine 130 each bind ATP. The active-site Proton acceptor is aspartate 221. Serine 334 bears the Phosphoserine; by PKA mark.

Belongs to the protein kinase superfamily. Ser/Thr protein kinase family. Requires Mg(2+) as cofactor. As to expression, expressed in the mushroom bodies (at protein level).

The enzyme catalyses L-seryl-[protein] + ATP = O-phospho-L-seryl-[protein] + ADP + H(+). The catalysed reaction is L-threonyl-[protein] + ATP = O-phospho-L-threonyl-[protein] + ADP + H(+). Activated by Pka-C1-mediated phosphorylation of Ser-334. Its function is as follows. Serine/threonine-protein kinase involved in memory formation. Together with the cAMP-dependent protein kinase A Pka-C1, promotes long-term memory (LTM) by regulating CrebB stability and activity. Involved in the maintenance of anesthesia-sensitive memory (ASM) which includes short-term memory (STM) and middle-term memory (MTM). This Drosophila melanogaster (Fruit fly) protein is Serine/threonine-protein kinase meng-po.